A 497-amino-acid polypeptide reads, in one-letter code: Probable cytosol aminopeptidase (497 aa).

K267 and D272 together coordinate Mn(2+). K279 is an active-site residue. Mn(2+) is bound by residues D290, D349, and E351. R353 is an active-site residue.

It belongs to the peptidase M17 family. The cofactor is Mn(2+).

The protein localises to the cytoplasm. It catalyses the reaction Release of an N-terminal amino acid, Xaa-|-Yaa-, in which Xaa is preferably Leu, but may be other amino acids including Pro although not Arg or Lys, and Yaa may be Pro. Amino acid amides and methyl esters are also readily hydrolyzed, but rates on arylamides are exceedingly low.. It carries out the reaction Release of an N-terminal amino acid, preferentially leucine, but not glutamic or aspartic acids.. Functionally, presumably involved in the processing and regular turnover of intracellular proteins. Catalyzes the removal of unsubstituted N-terminal amino acids from various peptides. The chain is Probable cytosol aminopeptidase from Pseudomonas putida (strain GB-1).